Reading from the N-terminus, the 933-residue chain is Phospholipase D2 (933 aa).

Disordered regions lie at residues 1–20 (MAAT…SSQL) and 134–160 (SPAP…RRTA). Positions 65 to 195 (VIAQVVGTER…TEFLEVSQLS (131 aa)) constitute a PX domain. Positions 203–311 (KGLEGVIRKR…WAQEITELAQ (109 aa)) constitute a PH domain. 2 PLD phosphodiesterase domains span residues 437–464 (TLWA…AYGR) and 751–778 (ELIY…NDRS). Residues 441 to 788 (HHEKLLVVDQ…LLGKRDSELA (348 aa)) form a catalytic region.

It belongs to the phospholipase D family. As to quaternary structure, interacts with PIP5K1B. Interacts with EGFR. Post-translationally, phosphorylated by FGR.

It localises to the cell membrane. The catalysed reaction is a 1,2-diacyl-sn-glycero-3-phosphocholine + H2O = a 1,2-diacyl-sn-glycero-3-phosphate + choline + H(+). It catalyses the reaction 1,2-dihexadecanoyl-sn-glycero-3-phosphocholine + H2O = 1,2-dihexadecanoyl-sn-glycero-3-phosphate + choline + H(+). Its function is as follows. Function as phospholipase selective for phosphatidylcholine. May have a role in signal-induced cytoskeletal regulation and/or endocytosis. The polypeptide is Phospholipase D2 (PLD2) (Bos taurus (Bovine)).